The primary structure comprises 405 residues: 2,3-diketo-5-methylthiopentyl-1-phosphate enolase (405 aa).

The active-site Proton acceptor is the lysine 91. Substrate contacts are provided by residues lysine 140, 166-169, histidine 257, glycine 329, and 351-352; these read KDDE and GG. Mg(2+) contacts are provided by lysine 166, aspartate 168, and glutamate 169. Residue lysine 166 is modified to N6-carboxylysine.

Belongs to the RuBisCO large chain family. Type IV subfamily. Homodimer. It depends on Mg(2+) as a cofactor.

The catalysed reaction is 5-methylsulfanyl-2,3-dioxopentyl phosphate = 2-hydroxy-5-methylsulfanyl-3-oxopent-1-enyl phosphate. The protein operates within amino-acid biosynthesis; L-methionine biosynthesis via salvage pathway; L-methionine from S-methyl-5-thio-alpha-D-ribose 1-phosphate: step 3/6. In terms of biological role, catalyzes the enolization of 2,3-diketo-5-methylthiopentyl-1-phosphate (DK-MTP-1-P) into 2-hydroxy-3-keto-5-methylthiopentenyl-1-phosphate (HK-MTPenyl-1-P). In Bacillus licheniformis (strain ATCC 14580 / DSM 13 / JCM 2505 / CCUG 7422 / NBRC 12200 / NCIMB 9375 / NCTC 10341 / NRRL NRS-1264 / Gibson 46), this protein is 2,3-diketo-5-methylthiopentyl-1-phosphate enolase.